The following is a 383-amino-acid chain: Flagellum-associated coiled-coil domain-containing protein 1 (383 aa).

The tract at residues 26-79 (PYPLPKHPTGKFKPVLPPPISKEHNSLLSQPGKSTVSPRDKVQSGNTESSKAPS) is disordered. A compositionally biased stretch (polar residues) spans 51–77 (SLLSQPGKSTVSPRDKVQSGNTESSKA). Coiled coils occupy residues 125 to 220 (TDII…YLKS) and 276 to 359 (KKMN…FQTK). Residue K354 is modified to N6-acetyllysine.

As to expression, isoform 1 is specific to germ cells of the testis and localizes to the principal piece of the sperm flagellum. Isoform 2 seems to be expressed mainly in somatic cells of the testis, and is not detected in mature spermatozoa (at protein level). Isoform 2 may also be expressed weakly in brain.

It localises to the cytoplasm. The protein resides in the cytoplasmic granule. It is found in the cell projection. The protein localises to the cilium. Its subcellular location is the flagellum. The chain is Flagellum-associated coiled-coil domain-containing protein 1 from Mus musculus (Mouse).